The following is a 185-amino-acid chain: ATP synthase subunit b, chloroplastic (185 aa).

Residues 7–29 (SFVYLVGHCPFAGSFAFNTDILA) traverse the membrane as a helical segment.

Belongs to the ATPase B chain family. In terms of assembly, F-type ATPases have 2 components, F(1) - the catalytic core - and F(0) - the membrane proton channel. F(1) has five subunits: alpha(3), beta(3), gamma(1), delta(1), epsilon(1). F(0) has four main subunits: a(1), b(1), b'(1) and c(10-14). The alpha and beta chains form an alternating ring which encloses part of the gamma chain. F(1) is attached to F(0) by a central stalk formed by the gamma and epsilon chains, while a peripheral stalk is formed by the delta, b and b' chains.

It is found in the plastid. The protein resides in the chloroplast thylakoid membrane. Its function is as follows. F(1)F(0) ATP synthase produces ATP from ADP in the presence of a proton or sodium gradient. F-type ATPases consist of two structural domains, F(1) containing the extramembraneous catalytic core and F(0) containing the membrane proton channel, linked together by a central stalk and a peripheral stalk. During catalysis, ATP synthesis in the catalytic domain of F(1) is coupled via a rotary mechanism of the central stalk subunits to proton translocation. Functionally, component of the F(0) channel, it forms part of the peripheral stalk, linking F(1) to F(0). This chain is ATP synthase subunit b, chloroplastic, found in Dioscorea elephantipes (Elephant's foot yam).